The sequence spans 118 residues: Hydrogenase maturation factor HypA (118 aa).

His-2 lines the Ni(2+) pocket. Zn(2+) contacts are provided by Cys-74, Cys-77, Cys-91, and Cys-94.

It belongs to the HypA/HybF family.

Functionally, involved in the maturation of [NiFe] hydrogenases. Required for nickel insertion into the metal center of the hydrogenase. The sequence is that of Hydrogenase maturation factor HypA from Helicobacter hepaticus (strain ATCC 51449 / 3B1).